The chain runs to 216 residues: MSLPMLQVALDNQTMASAYETTRLIAEEVDIIEVGTILCVGEGVRAVRDLKALYPHKIVLADAKIADAGKILSRMCFEANADWVTVICCADINTAKGALDVAKEFNGDVQIELTGYWTWEQAQQWRDAGIQQVVYHRSRDAQAAGVAWGEADITAIKRLSDMGFKVTVTGGLALEDLPLFKGIPIHVFIAGRSIRDAASPVEAARQFKRSIAELWG.

Asp11 contacts substrate. Positions 33 and 62 each coordinate Mg(2+). Arg192 serves as a coordination point for substrate.

Belongs to the HPS/KGPDC family. KGPDC subfamily. Homodimer. Mg(2+) is required as a cofactor.

The enzyme catalyses 3-dehydro-L-gulonate 6-phosphate + H(+) = L-xylulose 5-phosphate + CO2. It functions in the pathway cofactor degradation; L-ascorbate degradation; D-xylulose 5-phosphate from L-ascorbate: step 2/4. Functionally, catalyzes the decarboxylation of 3-keto-L-gulonate-6-P into L-xylulose-5-P. Is involved in the anaerobic L-ascorbate utilization. The chain is 3-keto-L-gulonate-6-phosphate decarboxylase UlaD from Escherichia fergusonii (strain ATCC 35469 / DSM 13698 / CCUG 18766 / IAM 14443 / JCM 21226 / LMG 7866 / NBRC 102419 / NCTC 12128 / CDC 0568-73).